The chain runs to 338 residues: Glycerol-3-phosphate dehydrogenase [NAD(P)+] (338 aa).

The NADPH site is built by Ser13, Trp14, and Lys108. Lys108, Gly139, and Ser141 together coordinate sn-glycerol 3-phosphate. Ala143 provides a ligand contact to NADPH. Residues Lys194, Asp247, Ser257, Arg258, and Asn259 each contribute to the sn-glycerol 3-phosphate site. Lys194 (proton acceptor) is an active-site residue. Arg258 serves as a coordination point for NADPH. 2 residues coordinate NADPH: Val282 and Glu284.

This sequence belongs to the NAD-dependent glycerol-3-phosphate dehydrogenase family.

Its subcellular location is the cytoplasm. The catalysed reaction is sn-glycerol 3-phosphate + NAD(+) = dihydroxyacetone phosphate + NADH + H(+). It catalyses the reaction sn-glycerol 3-phosphate + NADP(+) = dihydroxyacetone phosphate + NADPH + H(+). The protein operates within membrane lipid metabolism; glycerophospholipid metabolism. Catalyzes the reduction of the glycolytic intermediate dihydroxyacetone phosphate (DHAP) to sn-glycerol 3-phosphate (G3P), the key precursor for phospholipid synthesis. The polypeptide is Glycerol-3-phosphate dehydrogenase [NAD(P)+] (Streptococcus pyogenes serotype M2 (strain MGAS10270)).